Here is a 314-residue protein sequence, read N- to C-terminus: Serine protease 46 (314 aa).

In terms of domain architecture, Peptidase S1 spans 44 to 281 (VVNGKAVEVG…FTQWIKRQIG (238 aa)). A disulfide bond links C69 and C85. Residues H84 and D130 each act as charge relay system in the active site. Intrachain disulfides connect C164/C239, C197/C219, and C229/C257. S233 serves as the catalytic Charge relay system. Residues 293–313 (FLSPFILTGYILLVSLGSLWL) traverse the membrane as a helical segment.

Belongs to the peptidase S1 family.

It localises to the membrane. This is Serine protease 46 (Prss46) from Mus musculus (Mouse).